Reading from the N-terminus, the 163-residue chain is Beta-carbonic anhydrase 1 (163 aa).

4 residues coordinate Zn(2+): Cys-35, Asp-37, His-88, and Cys-91.

Belongs to the beta-class carbonic anhydrase family. Homotetramer. Zn(2+) serves as cofactor.

The catalysed reaction is hydrogencarbonate + H(+) = CO2 + H2O. In terms of biological role, catalyzes the reversible hydration of carbon dioxide to form bicarbonate. The polypeptide is Beta-carbonic anhydrase 1 (Mycobacterium bovis (strain ATCC BAA-935 / AF2122/97)).